The chain runs to 258 residues: Type II restriction enzyme HindII (258 aa).

It catalyses the reaction Endonucleolytic cleavage of DNA to give specific double-stranded fragments with terminal 5'-phosphates.. Functionally, a P subtype restriction enzyme that recognizes the double-stranded sequence 5'-GTYRAC-3' and cleaves after Y-3. The sequence is that of Type II restriction enzyme HindII (hindIIR) from Haemophilus influenzae (strain ATCC 51907 / DSM 11121 / KW20 / Rd).